The primary structure comprises 232 residues: MIKDERWEKVYSFDDSPYLMEILTELRNKDTDSIAFRKGLVKLGRYMGYEIIKTMDVEKIKIETPLEETEGIIVKDRKNVVIVTVLRAAVPLMEGLVKVFEHARIGIVSASRGKAPKFEIEMNYVKIPQITPEDTVIVADPMIATGSTLITVMEEIKKYGTPKRLIVLGILAAPEGINRIKEKFPEAEIFVTQIDRGLNSKGYILPGLGDAGDRAFGAPIKIPTLPQVHTID.

Position 38–42 (38–42) interacts with GTP; that stretch reads KGLVK. Residues Arg-87, Arg-112, and 140–148 each bind 5-phospho-alpha-D-ribose 1-diphosphate; that span reads DPMIATGST. Residues Ile-204 and 209–211 contribute to the uracil site; that span reads GDA. Residue Asp-210 coordinates 5-phospho-alpha-D-ribose 1-diphosphate.

It belongs to the UPRTase family. Mg(2+) is required as a cofactor.

The enzyme catalyses UMP + diphosphate = 5-phospho-alpha-D-ribose 1-diphosphate + uracil. It participates in pyrimidine metabolism; UMP biosynthesis via salvage pathway; UMP from uracil: step 1/1. Its activity is regulated as follows. Allosterically activated by GTP. Functionally, catalyzes the conversion of uracil and 5-phospho-alpha-D-ribose 1-diphosphate (PRPP) to UMP and diphosphate. The chain is Uracil phosphoribosyltransferase from Thermococcus sibiricus (strain DSM 12597 / MM 739).